Consider the following 434-residue polypeptide: MGRIANQTTASNDTDPFGRNEEVAKMEITVLSVTFFVAVIGNLSVLLAMHNTKKKSSRMHLFIKHLSLADMVVAFFQVLPQLCWEITFRFYGPDFLCRIVKHLQVLGMFASTYMMVMMTLDRYIAICHPLKTLQQPTQRAYIMIGSTWLCSLLLSTPQYFIFSLSEIQNGSYVYDCWGHFIEPWGIRAYITWITVGIFLIPVIILMICYGFICHSIWKNIKCKTMRGTRNTKDGMIGKVSVSSVTIISRAKLRTVKMTLVIVLAYIVCWAPFFIVQMWSVWDENFSWDDSENAAVTLSALLASLNSCCNPWIYMLFSGHLLYDFLRCFPCCKKPRNMLQKEDSDSSIRRNTLLTKLAAGRMTNDGFGSWRDPCNSRKSSQSIGLDCFCKSSQCLEHDCSRKSSQCIPLDCSRKSSQCIPLDCSRKSSQCMSKES.

Residues Met-1–Glu-27 are Extracellular-facing. 2 N-linked (GlcNAc...) asparagine glycosylation sites follow: Asn-6 and Asn-12. Residues Ile-28–Ala-48 traverse the membrane as a helical segment. The Cytoplasmic portion of the chain corresponds to Met-49–Ser-67. A helical membrane pass occupies residues Leu-68 to Phe-88. At Arg-89 to Arg-98 the chain is on the extracellular side. Cys-97 and Cys-176 are disulfide-bonded. A helical transmembrane segment spans residues Ile-99–Thr-119. The Cytoplasmic segment spans residues Leu-120 to Tyr-141. The chain crosses the membrane as a helical span at residues Ile-142–Phe-162. The Extracellular segment spans residues Ser-163 to Thr-191. A helical membrane pass occupies residues Trp-192–Ile-212. Topologically, residues Cys-213–Met-257 are cytoplasmic. A helical membrane pass occupies residues Thr-258 to Trp-278. The Extracellular portion of the chain corresponds to Ser-279–Val-295. A helical transmembrane segment spans residues Thr-296 to Phe-316. The Cytoplasmic portion of the chain corresponds to Ser-317–Ser-434.

This sequence belongs to the G-protein coupled receptor 1 family. Vasopressin/oxytocin receptor subfamily. As to expression, expressed in pituitary, liver, gills, swim bladder and lateral line.

The protein resides in the cell membrane. In terms of biological role, binds to vasotocin. Produces an induction of membrane chloride currents indicating that it is coupled to the inositol phosphate/calcium pathway. This chain is [Arg8]-vasotocin receptor, found in Catostomus commersonii (White sucker).